The following is a 755-amino-acid chain: uncharacterized protein (755 aa).

7 disordered regions span residues 1–44, 72–91, 99–174, 393–467, 523–545, 584–672, and 734–755; these read MAAP…AAAQ, AEHS…ATAQ, FSLS…IPHY, TTNV…SSSR, LPKT…EGGG, VSSS…LPSG, and QAAT…PRRK. Low complexity-rich tracts occupy residues 10-25 and 35-44; these read TTTQ…TTTT and TTTGSGAAAQ. Low complexity-rich tracts occupy residues 112-130, 139-151, and 393-412; these read ISSS…NASS, SPDL…LSGS, and TTNV…TKST. Residues 429–446 show a composition bias toward acidic residues; it reads IEEDTIQFDDPGQGEDDN. Positions 452 to 462 are enriched in pro residues; it reads NTPPPPGPPPN. Over residues 536 to 545 the composition is skewed to gly residues; that stretch reads ATGGVTEGGG. Polar residues predominate over residues 590–599; sequence LPQPQVATTI. Composition is skewed to low complexity over residues 600–666 and 740–755; these read TPQA…QTPQ and SQPS…PRRK.

It belongs to the chlamydial CPn_0572/CT_456/TC_0741 family.

This is an uncharacterized protein from Chlamydia pneumoniae (Chlamydophila pneumoniae).